A 467-amino-acid polypeptide reads, in one-letter code: RuvB-like helicase 2 (467 aa).

73–80 contributes to the ATP binding site; the sequence is GPPSTGKT.

Belongs to the RuvB family. In terms of assembly, may form heterododecamers with RVB1. Component of the SWR1 chromatin remodeling complex, the INO80 chromatin remodeling complex, and of the R2TP complex.

It localises to the nucleus. It catalyses the reaction ATP + H2O = ADP + phosphate + H(+). In terms of biological role, DNA helicase which participates in several chromatin remodeling complexes, including the SWR1 and the INO80 complexes. The SWR1 complex mediates the ATP-dependent exchange of histone H2A for the H2A variant HZT1 leading to transcriptional regulation of selected genes by chromatin remodeling. The INO80 complex remodels chromatin by shifting nucleosomes and is involved in DNA repair. Also involved in pre-rRNA processing. The sequence is that of RuvB-like helicase 2 (RVB2) from Kluyveromyces lactis (strain ATCC 8585 / CBS 2359 / DSM 70799 / NBRC 1267 / NRRL Y-1140 / WM37) (Yeast).